We begin with the raw amino-acid sequence, 126 residues long: MDNLIIAGILLLIKAMIFCIVNILEVLLEDIGILKSLFLHNAITIISSSVLYFLLSYYIINPRISASIIFDDCFSIFMLSSYTVCDDILITRILNKQMMLQFHPIRTIIKLLQHFPVKSSPNAHTA.

The next 3 membrane-spanning stretches (helical) occupy residues 4–24, 42–62, and 64–84; these read LIIA…VNIL, AITI…IINP, and ISAS…SYTV.

The protein localises to the membrane. This is an uncharacterized protein from Saccharomyces cerevisiae (strain ATCC 204508 / S288c) (Baker's yeast).